The sequence spans 147 residues: Large ribosomal subunit protein uL16 (147 aa).

Positions 1–20 are disordered; the sequence is MLMPKKVKHRKVQRGRMKGK.

Belongs to the universal ribosomal protein uL16 family. In terms of assembly, part of the 50S ribosomal subunit.

In terms of biological role, binds 23S rRNA and is also seen to make contacts with the A and possibly P site tRNAs. The protein is Large ribosomal subunit protein uL16 of Clostridium kluyveri (strain ATCC 8527 / DSM 555 / NBRC 12016 / NCIMB 10680 / K1).